Reading from the N-terminus, the 199-residue chain is Glycerol-3-phosphate acyltransferase (199 aa).

5 helical membrane-spanning segments follow: residues 3–23, 50–70, 77–97, 110–130, and 136–156; these read YILI…YLLP, VIGF…VLVF, IHYT…PVFL, GVFF…WISI, and YVSL…FFFN.

The protein belongs to the PlsY family. As to quaternary structure, probably interacts with PlsX.

It localises to the cell inner membrane. The catalysed reaction is an acyl phosphate + sn-glycerol 3-phosphate = a 1-acyl-sn-glycero-3-phosphate + phosphate. The protein operates within lipid metabolism; phospholipid metabolism. In terms of biological role, catalyzes the transfer of an acyl group from acyl-phosphate (acyl-PO(4)) to glycerol-3-phosphate (G3P) to form lysophosphatidic acid (LPA). This enzyme utilizes acyl-phosphate as fatty acyl donor, but not acyl-CoA or acyl-ACP. The protein is Glycerol-3-phosphate acyltransferase of Pseudothermotoga lettingae (strain ATCC BAA-301 / DSM 14385 / NBRC 107922 / TMO) (Thermotoga lettingae).